The following is a 196-amino-acid chain: Large ribosomal subunit protein uL18 (196 aa).

Belongs to the universal ribosomal protein uL18 family. In terms of assembly, part of the 50S ribosomal subunit. Contacts the 5S and 23S rRNAs.

In terms of biological role, this is one of the proteins that bind and probably mediate the attachment of the 5S RNA into the large ribosomal subunit, where it forms part of the central protuberance. The sequence is that of Large ribosomal subunit protein uL18 from Desulfurococcus amylolyticus (strain DSM 18924 / JCM 16383 / VKM B-2413 / 1221n) (Desulfurococcus kamchatkensis).